The sequence spans 523 residues: Lysine-specific demethylase 4D (523 aa).

One can recognise a JmjN domain in the interval 18 to 60; it reads IMIFHPTKEEFNDFDKYIAYMESQGAHRAGLAKIIPPKEWKAR. PolyADP-ribosyl glutamic acid is present on residues Glu-26 and Glu-27. Tyr-136 contributes to the 2-oxoglutarate binding site. The region spanning 146–312 is the JmjC domain; that stretch reads DENTKQWNLG…YGKMASQCSC (167 aa). Residues His-192 and Glu-194 each contribute to the Fe cation site. 2-oxoglutarate is bound by residues Asn-202 and Lys-210. Residues Cys-238 and His-244 each coordinate Zn(2+). Position 245 (Lys-245) interacts with 2-oxoglutarate. His-280 provides a ligand contact to Fe cation. Positions 310 and 312 each coordinate Zn(2+). Positions 407 to 523 are disordered; the sequence is RRSAVSGTAT…ASGCSWAPVP (117 aa). Residues 428–440 show a composition bias toward low complexity; that stretch reads KPSSTPSSTPGPS. The segment covering 448–458 has biased composition (basic residues); the sequence is NGRRGRGRPPQ.

It belongs to the JHDM3 histone demethylase family. Fe(2+) serves as cofactor. Ubiquitinated via 'Lys-63'-linked ubiquitin chains. Deubiquitinated by USP14 with the help of TRIM14 leading to stabilization.

Its subcellular location is the nucleus. It carries out the reaction N(6),N(6),N(6)-trimethyl-L-lysyl(9)-[histone H3] + 2 2-oxoglutarate + 2 O2 = N(6)-methyl-L-lysyl(9)-[histone H3] + 2 formaldehyde + 2 succinate + 2 CO2. Functionally, histone demethylase that specifically demethylates 'Lys-9' of histone H3, thereby playing a central role in histone code. Does not demethylate histone H3 'Lys-4', H3 'Lys-27', H3 'Lys-36' nor H4 'Lys-20'. Demethylates both di- and trimethylated H3 'Lys-9' residue, while it has no activity on monomethylated residues. Demethylation of Lys residue generates formaldehyde and succinate. The chain is Lysine-specific demethylase 4D (KDM4D) from Homo sapiens (Human).